The following is a 313-amino-acid chain: MIKRKKIALIGAGSIGGMIAYLVRSRNLGDVVLLDVNGGIAKGKALDIAESSPVAKHNGEILGTNNYADIEGADAIIVTAGISRKPGMSRDDLINTNVHVIKEVAENIAKYAPNAFVVVVTNPLDIMVLAMHKYSHLPSNMVVGMAGVLDAARFSYFIAKELNVSVDSVSSIVLGGHGDFMLPLVKYSSVGGISIADLVKMNLITQDRVNEIIEKTRKGGEEIVNLLKVGSAYYAPAESALLMVDSYLNDRRLMLSCSVYLKGEYGVHDLFVGVPVIIGKNGVEKVIELQLTEEEKNVFNDSVMSIRKLVSNI.

NAD(+) is bound by residues 11–16 and Asp35; that span reads GAGSIG. Substrate-binding residues include Arg84 and Arg90. Residues Asn97 and 120–122 contribute to the NAD(+) site; that span reads VTN. The substrate site is built by Asn122 and Arg153. The active-site Proton acceptor is His177.

It belongs to the LDH/MDH superfamily. MDH type 3 family.

It catalyses the reaction (S)-malate + NAD(+) = oxaloacetate + NADH + H(+). Its function is as follows. Catalyzes the reversible oxidation of malate to oxaloacetate. The protein is Malate dehydrogenase of Ehrlichia chaffeensis (strain ATCC CRL-10679 / Arkansas).